Reading from the N-terminus, the 86-residue chain is Small ribosomal subunit protein bS16 (86 aa).

This sequence belongs to the bacterial ribosomal protein bS16 family.

The sequence is that of Small ribosomal subunit protein bS16 from Thermoanaerobacter sp. (strain X514).